A 455-amino-acid chain; its full sequence is 2-oxoisovalerate dehydrogenase subunit alpha, mitochondrial (455 aa).

A mitochondrion-targeting transit peptide spans 1–55 (MQGSAKMAMAVAVAVARVWRPSRGLGRTGLPLLRLLGARGLARFHPHRWQQQQHF). Residues tyrosine 168 and arginine 169 each contribute to the thiamine diphosphate site. Residue serine 216 coordinates K(+). Thiamine diphosphate is bound at residue serine 217. Positions 218, 221, and 222 each coordinate K(+). Glutamate 248 is a Mg(2+) binding site. Thiamine diphosphate-binding residues include glycine 249, alanine 250, and arginine 275. 2 residues coordinate Mg(2+): asparagine 277 and tyrosine 279. Thiamine diphosphate is bound at residue histidine 346. Serine 347 carries the phosphoserine; by BCKDK modification. Threonine 348 is modified (phosphothreonine). 2 positions are modified to phosphoserine: serine 349 and serine 357. At lysine 366 the chain carries N6-acetyllysine; alternate. At lysine 366 the chain carries N6-succinyllysine; alternate. Lysine 390 carries the post-translational modification N6-succinyllysine.

Belongs to the BCKDHA family. Heterotetramer of 2 alpha/BCKDHA and 2 beta chains/BCKDHB that forms the branched-chain alpha-keto acid decarboxylase (E1) component of the BCKD complex. The branched-chain alpha-ketoacid dehydrogenase is a large complex composed of three major building blocks E1, E2 and E3. It is organized around E2, a 24-meric cubic core composed of DBT, to which are associated 6 to 12 copies of E1, and approximately 6 copies of the dehydrogenase E3, a DLD dimer. Interacts with PPM1K. The cofactor is thiamine diphosphate. Mg(2+) serves as cofactor. In terms of processing, phosphorylated at Ser-347 by BCKDK and dephosphorylated by protein phosphatase PPM1K. In terms of tissue distribution, expressed in kidney (at protein level).

It localises to the mitochondrion matrix. It carries out the reaction N(6)-[(R)-lipoyl]-L-lysyl-[protein] + 3-methyl-2-oxobutanoate + H(+) = N(6)-[(R)-S(8)-2-methylpropanoyldihydrolipoyl]-L-lysyl-[protein] + CO2. Its function is as follows. Together with BCKDHB forms the heterotetrameric E1 subunit of the mitochondrial branched-chain alpha-ketoacid dehydrogenase (BCKD) complex. The BCKD complex catalyzes the multi-step oxidative decarboxylation of alpha-ketoacids derived from the branched-chain amino-acids valine, leucine and isoleucine producing CO2 and acyl-CoA which is subsequently utilized to produce energy. The E1 subunit catalyzes the first step with the decarboxylation of the alpha-ketoacid forming an enzyme-product intermediate. A reductive acylation mediated by the lipoylamide cofactor of E2 extracts the acyl group from the E1 active site for the next step of the reaction. This Bos taurus (Bovine) protein is 2-oxoisovalerate dehydrogenase subunit alpha, mitochondrial (BCKDHA).